We begin with the raw amino-acid sequence, 142 residues long: MPANPELLISPKQRQGGGYEQLAADFLQQQGLRLIARNWQQPKVGEIDLVLIEHGRSWNVLVFAEVRKRKLLGYGDALASITRSKQKKLIKTARYFLRHHPEYADFECRFDVVGFTERTGRSGQGEPLQSEWLQGAFLAPAW.

The protein belongs to the UPF0102 family.

The sequence is that of UPF0102 protein PsycPRwf_0497 from Psychrobacter sp. (strain PRwf-1).